The primary structure comprises 571 residues: Phosphoenolpyruvate-protein phosphotransferase (571 aa).

Residue His207 is the Tele-phosphohistidine intermediate of the active site. Arg312 and Arg348 together coordinate phosphoenolpyruvate. Mg(2+) is bound by residues Glu435 and Asp459. Residues 458–459 (ND) and Arg469 contribute to the phosphoenolpyruvate site. The Proton donor role is filled by Cys506.

The protein belongs to the PEP-utilizing enzyme family. In terms of assembly, homodimer. It depends on Mg(2+) as a cofactor.

Its subcellular location is the cytoplasm. It catalyses the reaction L-histidyl-[protein] + phosphoenolpyruvate = N(pros)-phospho-L-histidyl-[protein] + pyruvate. Functionally, general (non sugar-specific) component of the phosphoenolpyruvate-dependent sugar phosphotransferase system (sugar PTS). This major carbohydrate active-transport system catalyzes the phosphorylation of incoming sugar substrates concomitantly with their translocation across the cell membrane. Enzyme I transfers the phosphoryl group from phosphoenolpyruvate (PEP) to the phosphoryl carrier protein (HPr). The sequence is that of Phosphoenolpyruvate-protein phosphotransferase (ptsI) from Chlamydia trachomatis serovar D (strain ATCC VR-885 / DSM 19411 / UW-3/Cx).